The primary structure comprises 156 residues: Endoribonuclease YbeY (156 aa).

Zn(2+)-binding residues include histidine 122, histidine 126, and histidine 132.

The protein belongs to the endoribonuclease YbeY family. The cofactor is Zn(2+).

The protein resides in the cytoplasm. Single strand-specific metallo-endoribonuclease involved in late-stage 70S ribosome quality control and in maturation of the 3' terminus of the 16S rRNA. The sequence is that of Endoribonuclease YbeY from Bacillus mycoides (strain KBAB4) (Bacillus weihenstephanensis).